Consider the following 654-residue polypeptide: Acetyl-coenzyme A synthetase (654 aa).

CoA-binding positions include 193 to 196 (RRGK) and threonine 313. ATP is bound by residues 389 to 391 (GEP), 413 to 418 (DTWWQT), aspartate 506, and arginine 521. Serine 529 provides a ligand contact to CoA. Residue arginine 532 coordinates ATP. The Mg(2+) site is built by histidine 545 and valine 548. An N6-acetyllysine modification is found at lysine 619.

Belongs to the ATP-dependent AMP-binding enzyme family. Mg(2+) serves as cofactor. Acetylated. Deacetylation by the SIR2-homolog deacetylase activates the enzyme.

It carries out the reaction acetate + ATP + CoA = acetyl-CoA + AMP + diphosphate. In terms of biological role, catalyzes the conversion of acetate into acetyl-CoA (AcCoA), an essential intermediate at the junction of anabolic and catabolic pathways. AcsA undergoes a two-step reaction. In the first half reaction, AcsA combines acetate with ATP to form acetyl-adenylate (AcAMP) intermediate. In the second half reaction, it can then transfer the acetyl group from AcAMP to the sulfhydryl group of CoA, forming the product AcCoA. This is Acetyl-coenzyme A synthetase from Wolinella succinogenes (strain ATCC 29543 / DSM 1740 / CCUG 13145 / JCM 31913 / LMG 7466 / NCTC 11488 / FDC 602W) (Vibrio succinogenes).